The following is a 560-amino-acid chain: Oxygen-dependent choline dehydrogenase 1 (560 aa).

Asp-8–Glu-37 is an FAD binding site. His-475 acts as the Proton acceptor in catalysis.

This sequence belongs to the GMC oxidoreductase family. Requires FAD as cofactor.

The catalysed reaction is choline + A = betaine aldehyde + AH2. It carries out the reaction betaine aldehyde + NAD(+) + H2O = glycine betaine + NADH + 2 H(+). The protein operates within amine and polyamine biosynthesis; betaine biosynthesis via choline pathway; betaine aldehyde from choline (cytochrome c reductase route): step 1/1. Involved in the biosynthesis of the osmoprotectant glycine betaine. Catalyzes the oxidation of choline to betaine aldehyde and betaine aldehyde to glycine betaine at the same rate. The sequence is that of Oxygen-dependent choline dehydrogenase 1 from Chromohalobacter salexigens (strain ATCC BAA-138 / DSM 3043 / CIP 106854 / NCIMB 13768 / 1H11).